Reading from the N-terminus, the 558-residue chain is Membrane protein insertase YidC (558 aa).

Helical transmembrane passes span 6-26, 326-348, 355-377, 424-444, 469-489, and 512-532; these read VIAA…FFQP, LAID…DYFF, GLAI…NFSF, LPIL…FVTI, VFGL…WPII, and IFMF…AGLV.

This sequence belongs to the OXA1/ALB3/YidC family. Type 1 subfamily. Interacts with the Sec translocase complex via SecD. Specifically interacts with transmembrane segments of nascent integral membrane proteins during membrane integration.

Its subcellular location is the cell inner membrane. Required for the insertion and/or proper folding and/or complex formation of integral membrane proteins into the membrane. Involved in integration of membrane proteins that insert both dependently and independently of the Sec translocase complex, as well as at least some lipoproteins. Aids folding of multispanning membrane proteins. This is Membrane protein insertase YidC from Pelagibacter ubique (strain HTCC1062).